The primary structure comprises 346 residues: Peroxidase 38 (346 aa).

A signal peptide spans 1-22; that stretch reads MHSSLIKLGFLLLLLQVSLSHA. Gln23 is modified (pyrrolidone carboxylic acid). Disulfide bonds link Cys33-Cys113, Cys66-Cys71, Cys119-Cys323, and Cys199-Cys231. The Proton acceptor role is filled by His64. The Ca(2+) site is built by Asp65, Val68, Gly70, Asp72, and Ser74. A glycan (N-linked (GlcNAc...) asparagine) is linked at Asn79. Pro161 contacts substrate. His192 is a binding site for heme b. Thr193 is a binding site for Ca(2+). Asn236 carries N-linked (GlcNAc...) asparagine glycosylation. Positions 244, 247, and 252 each coordinate Ca(2+).

Belongs to the peroxidase family. Classical plant (class III) peroxidase subfamily. Requires heme b as cofactor. The cofactor is Ca(2+).

It is found in the secreted. The protein resides in the vacuole. It carries out the reaction 2 a phenolic donor + H2O2 = 2 a phenolic radical donor + 2 H2O. Functionally, removal of H(2)O(2), oxidation of toxic reductants, biosynthesis and degradation of lignin, suberization, auxin catabolism, response to environmental stresses such as wounding, pathogen attack and oxidative stress. These functions might be dependent on each isozyme/isoform in each plant tissue. The sequence is that of Peroxidase 38 (PER38) from Arabidopsis thaliana (Mouse-ear cress).